The chain runs to 283 residues: Undecaprenyl-diphosphatase (283 aa).

Helical transmembrane passes span 40 to 60, 85 to 105, 113 to 133, 153 to 173, 193 to 213, 227 to 247, and 259 to 279; these read GAAF…IYFF, AKMG…GLLF, LRSL…LTIA, IGWK…IPGS, AARF…VFQL, LIAI…SIAF, and VFII…ATGM.

The protein belongs to the UppP family.

Its subcellular location is the cell inner membrane. The enzyme catalyses di-trans,octa-cis-undecaprenyl diphosphate + H2O = di-trans,octa-cis-undecaprenyl phosphate + phosphate + H(+). In terms of biological role, catalyzes the dephosphorylation of undecaprenyl diphosphate (UPP). Confers resistance to bacitracin. The polypeptide is Undecaprenyl-diphosphatase (Chlorobium limicola (strain DSM 245 / NBRC 103803 / 6330)).